A 264-amino-acid chain; its full sequence is Type II iodothyronine deiodinase (264 aa).

The Lumenal portion of the chain corresponds to 1-7; the sequence is MGLLSVD. The chain crosses the membrane as a helical; Signal-anchor for type III membrane protein span at residues 8-28; the sequence is LLITLQILPGFFSNCLFLALY. The Cytoplasmic segment spans residues 29–264; sequence DSVVLVKHVL…AESGQTGTEK (236 aa). The active site involves Sec124. Position 124 (Sec124) is a non-standard amino acid, selenocysteine.

The protein belongs to the iodothyronine deiodinase family. As to quaternary structure, predominantly monomer. Can form homodimers but homodimerization is not essential for enzyme activity. High levels seen in the metamorphosing tail.

Its subcellular location is the endoplasmic reticulum membrane. The catalysed reaction is 3,3',5-triiodo-L-thyronine + iodide + A + H(+) = L-thyroxine + AH2. The enzyme catalyses 3,3'-diiodo-L-thyronine + iodide + A + H(+) = 3,3',5'-triiodo-L-thyronine + AH2. It carries out the reaction 3'-iodo-L-thyronine + iodide + A + H(+) = 3',5'-diiodo-L-thyronine + AH2. It catalyses the reaction 3,3'-diiodothyronamine + iodide + A + H(+) = 3,3',5'-triiodothyronamine + AH2. The catalysed reaction is 3'-iodothyronamine + iodide + A + H(+) = 3',5'-diiodothyronamine + AH2. Its activity is regulated as follows. Not inhibited by N(6)-propylthiouracil. In terms of biological role, plays a crucial role in the metabolism of thyroid hormones (TH) and has specific roles in TH activation and inactivation by deiodination. Catalyzes the deiodination of L-thyroxine (T4) to 3,5,3'-triiodothyronine (T3) and 3',5'-diiodothyronine (3',5'-T2) to 3'-monoiodothyronine (3'-T1) via outer-ring deiodination (ORD). Catalyzes the deiodination of 3,3',5'-triiodothyronine (rT3) to 3,3'-diiodothyronine (3,3'-T2) via ORD. Catalyzes the phenolic ring deiodinations of 3,3',5'-triiodothyronamine and 3',5'- diiodothyronamine. This Aquarana catesbeiana (American bullfrog) protein is Type II iodothyronine deiodinase (dio2).